The primary structure comprises 429 residues: UDP-N-acetylglucosamine 1-carboxyvinyltransferase (429 aa).

22-23 (KN) provides a ligand contact to phosphoenolpyruvate. Arg102 is a binding site for UDP-N-acetyl-alpha-D-glucosamine. Cys126 (proton donor) is an active-site residue. Residue Cys126 is modified to 2-(S-cysteinyl)pyruvic acid O-phosphothioketal. UDP-N-acetyl-alpha-D-glucosamine is bound by residues 131 to 135 (RPVDL), Asp316, and Ile338.

It belongs to the EPSP synthase family. MurA subfamily.

The protein resides in the cytoplasm. It carries out the reaction phosphoenolpyruvate + UDP-N-acetyl-alpha-D-glucosamine = UDP-N-acetyl-3-O-(1-carboxyvinyl)-alpha-D-glucosamine + phosphate. It participates in cell wall biogenesis; peptidoglycan biosynthesis. In terms of biological role, cell wall formation. Adds enolpyruvyl to UDP-N-acetylglucosamine. This is UDP-N-acetylglucosamine 1-carboxyvinyltransferase from Rhodopseudomonas palustris (strain BisA53).